The primary structure comprises 402 residues: Tryptophan synthase beta chain (402 aa).

Lysine 92 carries the N6-(pyridoxal phosphate)lysine modification.

The protein belongs to the TrpB family. As to quaternary structure, tetramer of two alpha and two beta chains. Pyridoxal 5'-phosphate is required as a cofactor.

It catalyses the reaction (1S,2R)-1-C-(indol-3-yl)glycerol 3-phosphate + L-serine = D-glyceraldehyde 3-phosphate + L-tryptophan + H2O. The protein operates within amino-acid biosynthesis; L-tryptophan biosynthesis; L-tryptophan from chorismate: step 5/5. In terms of biological role, the beta subunit is responsible for the synthesis of L-tryptophan from indole and L-serine. The sequence is that of Tryptophan synthase beta chain from Staphylococcus epidermidis (strain ATCC 35984 / DSM 28319 / BCRC 17069 / CCUG 31568 / BM 3577 / RP62A).